A 419-amino-acid chain; its full sequence is UDP-N-acetylglucosamine 1-carboxyvinyltransferase (419 aa).

Residue 22–23 (KN) participates in phosphoenolpyruvate binding. Arginine 95 lines the UDP-N-acetyl-alpha-D-glucosamine pocket. The Proton donor role is filled by cysteine 119. The residue at position 119 (cysteine 119) is a 2-(S-cysteinyl)pyruvic acid O-phosphothioketal. UDP-N-acetyl-alpha-D-glucosamine contacts are provided by residues 164 to 167 (KVSV), aspartate 308, and isoleucine 330.

This sequence belongs to the EPSP synthase family. MurA subfamily.

The protein resides in the cytoplasm. The enzyme catalyses phosphoenolpyruvate + UDP-N-acetyl-alpha-D-glucosamine = UDP-N-acetyl-3-O-(1-carboxyvinyl)-alpha-D-glucosamine + phosphate. The protein operates within cell wall biogenesis; peptidoglycan biosynthesis. In terms of biological role, cell wall formation. Adds enolpyruvyl to UDP-N-acetylglucosamine. This is UDP-N-acetylglucosamine 1-carboxyvinyltransferase from Rickettsia akari (strain Hartford).